The following is a 151-amino-acid chain: UPF0251 protein Ctha_0452 (151 aa).

The protein belongs to the UPF0251 family.

The polypeptide is UPF0251 protein Ctha_0452 (Chloroherpeton thalassium (strain ATCC 35110 / GB-78)).